Here is a 221-residue protein sequence, read N- to C-terminus: Serine protease inhibitor 7 (221 aa).

The signal sequence occupies residues Met1 to Thr22. A propeptide spanning residues Ser23–Asn28 is cleaved from the precursor. Positions Asn25 to Pro30 match the Vacuolar targeting signal motif. 2 cysteine pairs are disulfide-bonded: Cys76/Cys125 and Cys174/Cys191.

It belongs to the protease inhibitor I3 (leguminous Kunitz-type inhibitor) family. Tubers. Not detected in root, stem, leaves or flower bud.

It localises to the vacuole. Inhibitor of trypsin (serine protease). May protect the plant by inhibiting proteases of invading organisms. This chain is Serine protease inhibitor 7, found in Solanum tuberosum (Potato).